The following is an 879-amino-acid chain: Beta-mannosidase (879 aa).

Positions 1 to 19 are cleaved as a signal peptide; that stretch reads MHLHLLLILALFRAGCVVA. N-linked (GlcNAc...) asparagine glycans are attached at residues N35, N77, N89, and N113. A disulfide bridge connects residues C167 and C176. 190-192 serves as a coordination point for substrate; it reads WDW. N-linked (GlcNAc...) asparagine glycans are attached at residues N226, N297, and N302. N456 contacts substrate. E457 serves as the catalytic Proton donor. 3 cysteine pairs are disulfide-bonded: C540–C629, C732–C761, and C764–C769. Catalysis depends on E554, which acts as the Nucleophile. N736 carries N-linked (GlcNAc...) asparagine glycosylation. 2 N-linked (GlcNAc...) asparagine glycosylation sites follow: N803 and N807.

The protein belongs to the glycosyl hydrolase 2 family. Monomer. In terms of tissue distribution, highest level in liver, high levels in lung, testis, skin and spleen, moderate level in thymus. Activity found in plasma, kidney, liver, spleen, pancreas, brain, testis, epididymis, heart, lung and skeletal muscle.

The protein resides in the lysosome. It carries out the reaction Hydrolysis of terminal, non-reducing beta-D-mannose residues in beta-D-mannosides.. It functions in the pathway glycan metabolism; N-glycan degradation. Its function is as follows. Exoglycosidase that cleaves the single beta-linked mannose residue from the non-reducing end of all N-linked glycoprotein oligosaccharides. The sequence is that of Beta-mannosidase from Mus musculus (Mouse).